Here is a 201-residue protein sequence, read N- to C-terminus: 3-isopropylmalate dehydratase small subunit (201 aa).

It belongs to the LeuD family. LeuD type 1 subfamily. As to quaternary structure, heterodimer of LeuC and LeuD.

The catalysed reaction is (2R,3S)-3-isopropylmalate = (2S)-2-isopropylmalate. Its pathway is amino-acid biosynthesis; L-leucine biosynthesis; L-leucine from 3-methyl-2-oxobutanoate: step 2/4. Its function is as follows. Catalyzes the isomerization between 2-isopropylmalate and 3-isopropylmalate, via the formation of 2-isopropylmaleate. This chain is 3-isopropylmalate dehydratase small subunit, found in Escherichia coli O157:H7.